The sequence spans 136 residues: TBK1 inhibitor DP96R (136 aa).

The tract at residues 66-86 is disordered; that stretch reads NNALEKPAGANNIPEKSAGRM.

The protein belongs to the asfivirus DP96R family.

Functionally, inhibits cGAS-STING-mediated type I IFN expression and NF-kB activation by inhibiting TBK1 and IKBKB/IKKB. Inhibits host TBK1 phosphorylation. The sequence is that of TBK1 inhibitor DP96R from Ornithodoros (relapsing fever ticks).